Reading from the N-terminus, the 741-residue chain is D-(-)-3-hydroxybutyrate oligomer hydrolase (741 aa).

A signal peptide spans 1–23; it reads MKTIQGKSPGRWYSRGMLLAAMA. Positions 45 to 68 are disordered; that stretch reads NGNAGGNGNNNGNNNGNTVSNTKP. Ser-338 serves as the catalytic Charge relay system.

This sequence belongs to the D-(-)-3-hydroxybutyrate oligomer hydrolase family.

It localises to the secreted. It catalyses the reaction (3R)-hydroxybutanoate dimer + H2O = 2 (R)-3-hydroxybutanoate + H(+). It functions in the pathway lipid metabolism; butanoate metabolism. In terms of biological role, participates in the degradation of poly-3-hydroxybutyrate (PHB). It works downstream of poly(3-hydroxybutyrate) depolymerase, hydrolyzing D(-)-3-hydroxybutyrate oligomers of various length (3HB-oligomers) into 3HB-monomers. This chain is D-(-)-3-hydroxybutyrate oligomer hydrolase, found in Ralstonia pickettii (Burkholderia pickettii).